A 198-amino-acid chain; its full sequence is Mediator of RNA polymerase II transcription subunit 20 (198 aa).

It belongs to the Mediator complex subunit 20 family. As to quaternary structure, component of the Mediator complex.

It localises to the nucleus. In terms of biological role, component of the Mediator complex, a coactivator involved in the regulated transcription of nearly all RNA polymerase II-dependent genes. Mediator functions as a bridge to convey information from gene-specific regulatory proteins to the basal RNA polymerase II transcription machinery. Mediator is recruited to promoters by direct interactions with regulatory proteins and serves as a scaffold for the assembly of a functional preinitiation complex with RNA polymerase II and the general transcription factors. The sequence is that of Mediator of RNA polymerase II transcription subunit 20 (mdt-20) from Caenorhabditis briggsae.